The sequence spans 142 residues: Taurine up-regulated 1 protein (142 aa).

The signal sequence occupies residues M1–A40. Residues R41–G123 lie on the Extracellular side of the membrane. Residues A124–M140 form a helical membrane-spanning segment. Over P141 to P142 the chain is Cytoplasmic.

Widely expressed in the adult with highest levels in placenta and testis. Also expressed in a number of embryonic tissues at multiple embryonic stages.

It localises to the nucleus membrane. The protein resides in the mitochondrion membrane. Its subcellular location is the cytoplasm. In Mus musculus (Mouse), this protein is Taurine up-regulated 1 protein.